A 175-amino-acid chain; its full sequence is Gamma-crystallin B (175 aa).

Beta/gamma crystallin 'Greek key' domains follow at residues 2–40 and 41–83; these read GKIT…RVDS and GCWM…CLIP. The segment at 84–88 is connecting peptide; it reads QHSGT. 2 Beta/gamma crystallin 'Greek key' domains span residues 89-129 and 130-172; these read YRMR…NVME and GCWV…RRVM.

It belongs to the beta/gamma-crystallin family.

Functionally, crystallins are the dominant structural components of the vertebrate eye lens. The protein is Gamma-crystallin B (Crygb) of Mus musculus (Mouse).